The primary structure comprises 294 residues: Glycine--tRNA ligase alpha subunit (294 aa).

This sequence belongs to the class-II aminoacyl-tRNA synthetase family. Tetramer of two alpha and two beta subunits.

Its subcellular location is the cytoplasm. It carries out the reaction tRNA(Gly) + glycine + ATP = glycyl-tRNA(Gly) + AMP + diphosphate. The chain is Glycine--tRNA ligase alpha subunit from Oleidesulfovibrio alaskensis (strain ATCC BAA-1058 / DSM 17464 / G20) (Desulfovibrio alaskensis).